The sequence spans 171 residues: Ribosome maturation factor RimM (171 aa).

Positions Asp93–Leu167 constitute a PRC barrel domain.

Belongs to the RimM family. Binds ribosomal protein uS19.

It is found in the cytoplasm. Functionally, an accessory protein needed during the final step in the assembly of 30S ribosomal subunit, possibly for assembly of the head region. Essential for efficient processing of 16S rRNA. May be needed both before and after RbfA during the maturation of 16S rRNA. It has affinity for free ribosomal 30S subunits but not for 70S ribosomes. The protein is Ribosome maturation factor RimM of Lactobacillus helveticus (strain DPC 4571).